Here is a 361-residue protein sequence, read N- to C-terminus: Histidinol-phosphate aminotransferase (361 aa).

At Lys224 the chain carries N6-(pyridoxal phosphate)lysine.

The protein belongs to the class-II pyridoxal-phosphate-dependent aminotransferase family. Histidinol-phosphate aminotransferase subfamily. In terms of assembly, homodimer. Pyridoxal 5'-phosphate serves as cofactor.

The enzyme catalyses L-histidinol phosphate + 2-oxoglutarate = 3-(imidazol-4-yl)-2-oxopropyl phosphate + L-glutamate. The protein operates within amino-acid biosynthesis; L-histidine biosynthesis; L-histidine from 5-phospho-alpha-D-ribose 1-diphosphate: step 7/9. This Bacillus licheniformis (strain ATCC 14580 / DSM 13 / JCM 2505 / CCUG 7422 / NBRC 12200 / NCIMB 9375 / NCTC 10341 / NRRL NRS-1264 / Gibson 46) protein is Histidinol-phosphate aminotransferase.